The sequence spans 250 residues: Geranylgeranylglyceryl phosphate synthase (250 aa).

Positions 26 and 55 each coordinate Mg(2+). Residues 174-180, 205-206, and 227-228 each bind sn-glycerol 1-phosphate; these read YLEAGSG, GG, and GT.

The protein belongs to the GGGP/HepGP synthase family. Group II subfamily. It depends on Mg(2+) as a cofactor.

It is found in the cytoplasm. It catalyses the reaction sn-glycerol 1-phosphate + (2E,6E,10E)-geranylgeranyl diphosphate = sn-3-O-(geranylgeranyl)glycerol 1-phosphate + diphosphate. It functions in the pathway membrane lipid metabolism; glycerophospholipid metabolism. Its function is as follows. Prenyltransferase that catalyzes the transfer of the geranylgeranyl moiety of geranylgeranyl diphosphate (GGPP) to the C3 hydroxyl of sn-glycerol-1-phosphate (G1P). This reaction is the first ether-bond-formation step in the biosynthesis of archaeal membrane lipids. The polypeptide is Geranylgeranylglyceryl phosphate synthase (Nitrosopumilus maritimus (strain SCM1)).